We begin with the raw amino-acid sequence, 104 residues long: Glutaredoxin-C15 (104 aa).

The Glutaredoxin domain occupies 1 to 103 (MERVAKLSTE…PMLKAAGAIW (103 aa)). C21 and C24 are disulfide-bonded.

The protein belongs to the glutaredoxin family. CC-type subfamily.

The protein resides in the cytoplasm. Its function is as follows. Has a glutathione-disulfide oxidoreductase activity in the presence of NADPH and glutathione reductase. Reduces low molecular weight disulfides and proteins. The chain is Glutaredoxin-C15 (GRXC15) from Oryza sativa subsp. japonica (Rice).